Here is a 364-residue protein sequence, read N- to C-terminus: Fructose-1,6-bisphosphatase class 1 2 (364 aa).

Positions 101, 123, 125, and 126 each coordinate Mg(2+). Substrate is bound by residues 126–129 (DGSS) and Asn-218. Mg(2+) is bound at residue Glu-290.

The protein belongs to the FBPase class 1 family. As to quaternary structure, homotetramer. Mg(2+) serves as cofactor.

It localises to the cytoplasm. It carries out the reaction beta-D-fructose 1,6-bisphosphate + H2O = beta-D-fructose 6-phosphate + phosphate. It functions in the pathway carbohydrate biosynthesis; gluconeogenesis. The protein is Fructose-1,6-bisphosphatase class 1 2 of Cupriavidus necator (strain ATCC 17699 / DSM 428 / KCTC 22496 / NCIMB 10442 / H16 / Stanier 337) (Ralstonia eutropha).